A 143-amino-acid polypeptide reads, in one-letter code: Mediator of RNA polymerase II transcription subunit 9 (143 aa).

Residues 84-141 (QDCNHKIFELQKRFESAREQIRQLPGIDYNKDEQLQRLELLRNQFKLKQQLIRKYKDT) are a coiled coil.

The protein belongs to the Mediator complex subunit 9 family. As to quaternary structure, component of the Mediator complex.

It is found in the nucleus. Component of the Mediator complex, a coactivator involved in the regulated transcription of nearly all RNA polymerase II-dependent genes. Mediator functions as a bridge to convey information from gene-specific regulatory proteins to the basal RNA polymerase II transcription machinery. Mediator is recruited to promoters by direct interactions with regulatory proteins and serves as a scaffold for the assembly of a functional preinitiation complex with RNA polymerase II and the general transcription factors. This Drosophila pseudoobscura pseudoobscura (Fruit fly) protein is Mediator of RNA polymerase II transcription subunit 9 (MED9).